The chain runs to 97 residues: Small cell adhesion glycoprotein (97 aa).

The Extracellular portion of the chain corresponds to 1-36 (MNNLPATPSPEELMTTPVFQAPETLSPQAEEASTAL). T7 carries O-linked (GalNAc...) threonine glycosylation. O-linked (GalNAc...) serine glycosylation is present at S9. O-linked (GalNAc...) threonine glycosylation is found at T15, T16, and T24. Residue S26 is glycosylated (O-linked (GalNAc...) serine). The chain crosses the membrane as a helical; Signal-anchor for type III membrane protein span at residues 37–57 (IAVVITVVFLTLLSVVTLIFF). Topologically, residues 58 to 97 (HLYKNKGSYVTYEPAEGEPSAILQMETDSAKGREKEEYFI) are cytoplasmic.

This sequence belongs to the SMAGP family. O-glycosylated. The O-glycan is modified with sialic acid residues.

The protein resides in the cell membrane. It localises to the cytoplasmic vesicle membrane. In terms of biological role, may play a role in epithelial cell-cell contacts. May play a role in tumor invasiveness and metastasis formation. The chain is Small cell adhesion glycoprotein (Smagp) from Mus musculus (Mouse).